A 324-amino-acid polypeptide reads, in one-letter code: Testisin (324 aa).

A signal peptide spans 1–21 (MGARGKTLVPLLVVVATAAMA). The propeptide occupies 22–54 (LQSTYLQVDPEKPELQEPDLLSGPCGHRTIPSR). Cystine bridges form between C46–C167 and C80–C96. In terms of domain architecture, Peptidase S1 spans 55-296 (IVGGDDAELG…HYNWIQSTMI (242 aa)). Residues H95 and D147 each act as charge relay system in the active site. N-linked (GlcNAc...) asparagine glycans are attached at residues N170, N177, and N210. 3 cysteine pairs are disulfide-bonded: C181/C254, C214/C233, and C244/C272. The Charge relay system role is filled by S248. N283 carries N-linked (GlcNAc...) asparagine glycosylation. N298 carries the GPI-anchor amidated asparagine lipid modification. Residues 299–324 (GLLRPDPVPLLLFLTLAWASSLLRPA) constitute a propeptide, removed in mature form.

It belongs to the peptidase S1 family. Testis.

The protein resides in the cell membrane. Could regulate proteolytic events associated with testicular germ cell maturation. This chain is Testisin (Prss21), found in Mus musculus (Mouse).